The sequence spans 542 residues: CTP synthase (542 aa).

The tract at residues 1–269 (MQTKYIFITG…DALICELLHL (269 aa)) is amidoligase domain. Residue Ser14 participates in CTP binding. Ser14 contributes to the UTP binding site. Residues 15 to 20 (SLGKGL) and Asp72 contribute to the ATP site. 2 residues coordinate Mg(2+): Asp72 and Glu143. CTP is bound by residues 150–152 (DIE), 189–194 (KTKPSQ), and Lys225. Residues 189-194 (KTKPSQ) and Lys225 each bind UTP. 241–243 (KDV) serves as a coordination point for ATP. The Glutamine amidotransferase type-1 domain occupies 301–538 (YVQHQDAYKS…IQAMIIYHKS (238 aa)). Gly358 contacts L-glutamine. The active-site Nucleophile; for glutamine hydrolysis is the Cys385. L-glutamine-binding positions include 386–389 (LGMQ), Glu409, and Arg466. Catalysis depends on residues His511 and Glu513.

The protein belongs to the CTP synthase family. Homotetramer.

It catalyses the reaction UTP + L-glutamine + ATP + H2O = CTP + L-glutamate + ADP + phosphate + 2 H(+). The enzyme catalyses L-glutamine + H2O = L-glutamate + NH4(+). The catalysed reaction is UTP + NH4(+) + ATP = CTP + ADP + phosphate + 2 H(+). It participates in pyrimidine metabolism; CTP biosynthesis via de novo pathway; CTP from UDP: step 2/2. Its activity is regulated as follows. Allosterically activated by GTP, when glutamine is the substrate; GTP has no effect on the reaction when ammonia is the substrate. The allosteric effector GTP functions by stabilizing the protein conformation that binds the tetrahedral intermediate(s) formed during glutamine hydrolysis. Inhibited by the product CTP, via allosteric rather than competitive inhibition. Its function is as follows. Catalyzes the ATP-dependent amination of UTP to CTP with either L-glutamine or ammonia as the source of nitrogen. Regulates intracellular CTP levels through interactions with the four ribonucleotide triphosphates. The protein is CTP synthase of Protochlamydia amoebophila (strain UWE25).